A 473-amino-acid polypeptide reads, in one-letter code: ATP-dependent 6-phosphofructokinase 1 (473 aa).

Serine 71 bears the Phosphoserine mark. ATP-binding positions include glycine 102, 165-166 (RG), and 190-193 (GDGS). A Mg(2+)-binding site is contributed by aspartate 191. Residues 219-221 (TID), 264-266 (MGR), glutamate 320, and 376-379 (YMIR) each bind substrate. The active-site Proton acceptor is aspartate 221.

This sequence belongs to the phosphofructokinase type A (PFKA) family. PPi-dependent PFK group II subfamily. Atypical ATP-dependent clade 'X' sub-subfamily. In terms of assembly, homotetramer. Mg(2+) is required as a cofactor. In terms of tissue distribution, expressed in roots, leaves, stems and flowers.

Its subcellular location is the cytoplasm. It catalyses the reaction beta-D-fructose 6-phosphate + ATP = beta-D-fructose 1,6-bisphosphate + ADP + H(+). It functions in the pathway carbohydrate degradation; glycolysis; D-glyceraldehyde 3-phosphate and glycerone phosphate from D-glucose: step 3/4. Its activity is regulated as follows. Allosterically activated by AMP. Functionally, catalyzes the phosphorylation of D-fructose 6-phosphate to fructose 1,6-bisphosphate by ATP, the first committing step of glycolysis. This is ATP-dependent 6-phosphofructokinase 1 from Arabidopsis thaliana (Mouse-ear cress).